A 659-amino-acid polypeptide reads, in one-letter code: MLLISNPRHLGHPMSPGNWKRLIILLSCVFGGAEMNQQHNNPHQPMTLTWQVLSQTGSVVWEKKAVEPPWTWWPSLEPDVCALVAGLESWDIPELTASASQQARPPDSNYEHAYNQITWGTLGCSYPRARTRIARSQFYVCPRDGRSLSEARRCGGLESLYCKEWGCETAGTAYWQPRSSWDLITVGQGHPTGTCERTGWCNPLKIEFTEPGKRFRNWLQGRTWGLRFYVTGHPGVQLTIRLVITSPPPVVVGPDPVLAEQGPPRKIPFLPRVPVPTLSPPASPIPTVQASPPAPSTPSPTTGDRLFGLVQGAFLALNATNPEATESCWLCLALGPPYYEGIATPGQVTYASTDSQCRWGGKGKLTLTEVSGLGLCIGKVPPTHQHLCNLTIPLNASHTHKYLLPSNRSWWACNSGLTPCLSTSVFNQSNDFCIQIQLVPRIYYHPDGTLLQAYESPHSRNKREPVSLTLAVLLGLGVAAGIGTGSTALIKGPIDLQQGLTSLQIAMDTDLRALQDSISKLEDSLTSLSEVVLQNRRGLDLLFLKEGGLCAALKEECCFYVDHSGAVRDSMRRLKERLDKRQLEHQKNLSWYEGWFNRSPWLTTLLSALAGPLLLLLLLLTLGPCVINKLVQFINDRVSAVRILVLRHKYQTLDNEDNL.

The first 35 residues, 1–35 (MLLISNPRHLGHPMSPGNWKRLIILLSCVFGGAEM), serve as a signal peptide directing secretion. Topologically, residues 36–606 (NQQHNNPHQP…NRSPWLTTLL (571 aa)) are extracellular. Disulfide bonds link C141–C162 and C154–C167. A disordered region spans residues 278-301 (LSPPASPIPTVQASPPAPSTPSPT). N-linked (GlcNAc...) asparagine; by host glycosylation occurs at N318. 3 disulfide bridges follow: C328-C331, C328-C558, and C550-C557. Positions 328-331 (CWLC) match the CXXC motif. Residues N389, N395, N407, and N427 are each glycosylated (N-linked (GlcNAc...) asparagine; by host). Residues 466-486 (VSLTLAVLLGLGVAAGIGTGS) form a fusion peptide region. Positions 506-532 (AMDTDLRALQDSISKLEDSLTSLSEVV) form a coiled coil. The immunosuppression stretch occupies residues 533-549 (LQNRRGLDLLFLKEGGL). The CX6CC motif lies at 550-558 (CAALKEECC). Residues 567-587 (VRDSMRRLKERLDKRQLEHQK) adopt a coiled-coil conformation. The chain crosses the membrane as a helical span at residues 607–627 (SALAGPLLLLLLLLTLGPCVI). The S-palmitoyl cysteine; by host moiety is linked to residue C625. Residues 628-659 (NKLVQFINDRVSAVRILVLRHKYQTLDNEDNL) are Cytoplasmic-facing. Positions 650–653 (YQTL) match the YXXL motif; contains endocytosis signal motif.

As to quaternary structure, the mature envelope protein (Env) consists of a trimer of SU-TM heterodimers attached by a labile interchain disulfide bond. Specific enzymatic cleavages in vivo yield mature proteins. Envelope glycoproteins are synthesized as an inactive precursor that is N-glycosylated and processed likely by host cell furin or by a furin-like protease in the Golgi to yield the mature SU and TM proteins. The cleavage site between SU and TM requires the minimal sequence [KR]-X-[KR]-R. The R-peptide is released from the C-terminus of the cytoplasmic tail of the TM protein upon particle formation as a result of proteolytic cleavage by the viral protease. Cleavage of this peptide is required for TM to become fusogenic. Post-translationally, the CXXC motif is highly conserved across a broad range of retroviral envelope proteins. It is thought to participate in the formation of a labile disulfide bond possibly with the CX6CC motif present in the transmembrane protein. Isomerization of the intersubunit disulfide bond to an SU intrachain disulfide bond is thought to occur upon receptor recognition in order to allow membrane fusion. In terms of processing, the transmembrane protein is palmitoylated. The R-peptide is palmitoylated.

It is found in the virion membrane. It localises to the host cell membrane. In terms of biological role, the surface protein (SU) attaches the virus to the host cell by binding to its receptor. This interaction triggers the refolding of the transmembrane protein (TM) and is thought to activate its fusogenic potential by unmasking its fusion peptide. Fusion occurs at the host cell plasma membrane. The transmembrane protein (TM) acts as a class I viral fusion protein. Under the current model, the protein has at least 3 conformational states: pre-fusion native state, pre-hairpin intermediate state, and post-fusion hairpin state. During viral and target cell membrane fusion, the coiled coil regions (heptad repeats) assume a trimer-of-hairpins structure, positioning the fusion peptide in close proximity to the C-terminal region of the ectodomain. The formation of this structure appears to drive apposition and subsequent fusion of viral and target cell membranes. Membranes fusion leads to delivery of the nucleocapsid into the cytoplasm. The chain is Envelope glycoprotein (env) from Phascolarctos cinereus (Koala).